Consider the following 172-residue polypeptide: Interferon tau-3 (172 aa).

2 disulfides stabilise this stretch: C1–C99 and C29–C139.

Belongs to the alpha/beta interferon family. IFN-alphaII subfamily. In terms of tissue distribution, constitutively and exclusively expressed in the mononuclear cells of the extraembryonic trophectoderm.

It localises to the secreted. Its function is as follows. Paracrine hormone primarily responsible for maternal recognition of pregnancy. Interacts with endometrial receptors, probably type I interferon receptors, and blocks estrogen receptor expression, preventing the estrogen-induced increase in oxytocin receptor expression in the endometrium. This results in the suppression of the pulsatile endometrial release of the luteolytic hormone prostaglandin F2-alpha, hindering the regression of the corpus luteum (luteolysis) and therefore a return to ovarian cyclicity. This, and a possible direct effect of IFN-tau on prostaglandin synthesis, leads in turn to continued ovarian progesterone secretion, which stimulates the secretion by the endometrium of the nutrients required for the growth of the conceptus. In summary, displays particularly high antiviral and antiproliferative potency concurrently with particular weak cytotoxicity, high antiluteolytic activity and immunomodulatory properties. In contrast with other IFNs, IFN-tau is not virally inducible. The protein is Interferon tau-3 (IFNT3) of Ovis aries (Sheep).